A 172-amino-acid chain; its full sequence is Lipoprotein signal peptidase (172 aa).

4 helical membrane passes run T12 to F32, V43 to N63, W77 to L97, and G102 to I122. Catalysis depends on residues D132 and D150. Residues H142–L162 form a helical membrane-spanning segment.

Belongs to the peptidase A8 family.

The protein localises to the cell inner membrane. It catalyses the reaction Release of signal peptides from bacterial membrane prolipoproteins. Hydrolyzes -Xaa-Yaa-Zaa-|-(S,diacylglyceryl)Cys-, in which Xaa is hydrophobic (preferably Leu), and Yaa (Ala or Ser) and Zaa (Gly or Ala) have small, neutral side chains.. Its pathway is protein modification; lipoprotein biosynthesis (signal peptide cleavage). This protein specifically catalyzes the removal of signal peptides from prolipoproteins. This is Lipoprotein signal peptidase from Paraburkholderia phytofirmans (strain DSM 17436 / LMG 22146 / PsJN) (Burkholderia phytofirmans).